A 140-amino-acid chain; its full sequence is Holo-[acyl-carrier-protein] synthase (140 aa).

Mg(2+)-binding residues include D8 and E62.

This sequence belongs to the P-Pant transferase superfamily. AcpS family. Mg(2+) is required as a cofactor.

The protein resides in the cytoplasm. It carries out the reaction apo-[ACP] + CoA = holo-[ACP] + adenosine 3',5'-bisphosphate + H(+). Functionally, transfers the 4'-phosphopantetheine moiety from coenzyme A to a Ser of acyl-carrier-protein. The polypeptide is Holo-[acyl-carrier-protein] synthase (Cupriavidus pinatubonensis (strain JMP 134 / LMG 1197) (Cupriavidus necator (strain JMP 134))).